The primary structure comprises 386 residues: Trichocyst matrix protein T2-B (386 aa).

The N-terminal stretch at 1–19 (MKTIILALALIALVSSTQS) is a signal peptide. Positions 20–48 (DVIDTIKKIDQSPFGRTLFDTIWLELQTG) are excised as a propeptide. The stretch at 51-154 (LDRLVSTLTD…AEEHEDFEEK (104 aa)) forms a coiled coil. The propeptide occupies 184-238 (KGKAAKQPHKFTKDVANLIQKHFTTSAKKTAKFQHRKGYSKLFKAFATIASKVEQ). The stretch at 294 to 325 (ALANAISDLAALNDIIAQVEASLDTTVQRIEN) forms a coiled coil.

The protein belongs to the TMP family.

It is found in the trichocyst. In terms of biological role, structural protein that crystallize inside the trichocyst matrix. This is Trichocyst matrix protein T2-B (T2B) from Paramecium tetraurelia.